A 444-amino-acid polypeptide reads, in one-letter code: Argininosuccinate synthase (444 aa).

ATP is bound by residues 17-25 and A43; that span reads AFSGGLDTS. Y99 contacts L-citrulline. G129 and T131 together coordinate ATP. L-aspartate contacts are provided by T131, N135, and D136. L-citrulline is bound at residue N135. D136 is an ATP binding site. 2 residues coordinate L-citrulline: R139 and S192. D194 is an ATP binding site. Residues T201, E203, and E280 each coordinate L-citrulline.

Belongs to the argininosuccinate synthase family. Type 2 subfamily. Homotetramer.

The protein localises to the cytoplasm. It catalyses the reaction L-citrulline + L-aspartate + ATP = 2-(N(omega)-L-arginino)succinate + AMP + diphosphate + H(+). It functions in the pathway amino-acid biosynthesis; L-arginine biosynthesis; L-arginine from L-ornithine and carbamoyl phosphate: step 2/3. The polypeptide is Argininosuccinate synthase (Burkholderia lata (strain ATCC 17760 / DSM 23089 / LMG 22485 / NCIMB 9086 / R18194 / 383)).